We begin with the raw amino-acid sequence, 145 residues long: Large ribosomal subunit protein uL13 (145 aa).

This sequence belongs to the universal ribosomal protein uL13 family. Part of the 50S ribosomal subunit. Binds to Obg (AC P20964).

Functionally, this protein is one of the early assembly proteins of the 50S ribosomal subunit, although it is not seen to bind rRNA by itself. It is important during the early stages of 50S assembly. This chain is Large ribosomal subunit protein uL13, found in Bacillus subtilis (strain 168).